The primary structure comprises 574 residues: Serine/threonine-protein kinase B (574 aa).

The region spanning Tyr-34 to Tyr-301 is the Protein kinase domain. Residues Leu-40–Thr-48 and Lys-65 contribute to the ATP site. Residue Asp-163 is the Proton acceptor of the active site. The disordered stretch occupies residues Gly-319–Asp-407. The span at Thr-343–Lys-364 shows a compositional bias: polar residues. Pentapeptide repeat domains lie at Gln-454 to Lys-493 and Ala-504 to Gly-543.

This sequence belongs to the protein kinase superfamily. Ser/Thr protein kinase family. In terms of processing, autophosphorylated.

It carries out the reaction L-seryl-[protein] + ATP = O-phospho-L-seryl-[protein] + ADP + H(+). The catalysed reaction is L-threonyl-[protein] + ATP = O-phospho-L-threonyl-[protein] + ADP + H(+). In terms of biological role, protein kinase required for cell motility, but not for phototaxis. The sequence is that of Serine/threonine-protein kinase B (spkB) from Synechocystis sp. (strain ATCC 27184 / PCC 6803 / Kazusa).